We begin with the raw amino-acid sequence, 132 residues long: CLAVATA3/ESR (CLE)-related protein 2-B (132 aa).

The N-terminal stretch at 1–26 is a signal peptide; sequence MASRMGMVAILSLFVCALVASTSVNA. A disordered region spans residues 68–132; sequence NRASKQLDRE…IGPPPFLDRY (65 aa). Hydroxyproline is present on residues P82 and P85. A glycan (O-linked (Ara...) hydroxyproline) is linked at P85.

It belongs to the CLV3/ESR signal peptide family. In terms of processing, the O-glycosylation (arabinosylation) of the hydroxyproline Pro-85 enhances binding affinity of the ESR2Bp peptide for its receptor. Seed endosperm.

The protein resides in the secreted. The protein localises to the extracellular space. Functionally, extracellular signal peptide that regulates cell fate. In Zea mays (Maize), this protein is CLAVATA3/ESR (CLE)-related protein 2-B.